A 204-amino-acid polypeptide reads, in one-letter code: COBRA-like protein 5 (204 aa).

The N-terminal stretch at 1-24 is a signal peptide; that stretch reads MESLFSTMIVLLLVSFSCLISTEA. N-linked (GlcNAc...) asparagine glycans are attached at residues asparagine 31 and asparagine 195.

The protein belongs to the COBRA family. As to expression, expressed in roots, stems, leaves, flowers and siliques.

In Arabidopsis thaliana (Mouse-ear cress), this protein is COBRA-like protein 5 (COBL5).